The sequence spans 930 residues: Serine/threonine-protein kinase ATG1 (930 aa).

The Protein kinase domain maps to 23–326 (FIIDREIGKG…FENFFAHHVV (304 aa)). ATP-binding positions include 29–37 (IGKGSFAQV) and K52. The active-site Proton acceptor is D166. 4 disordered regions span residues 336–468 (DDIP…TEEE), 504–563 (GQNN…SASP), 853–874 (ISSGKEIAKDATQEGSDLDTEE), and 904–930 (NQAKHVSAMRRLSGDVTPRSVPSYGST). Positions 337–350 (DIPKPPKRELETIR) are enriched in basic and acidic residues. Low complexity predominate over residues 377 to 393 (SPKSPRSSPRSSTVNSS). 2 stretches are compositionally biased toward polar residues: residues 400-417 (RQSQNAERRLSISSHNSG) and 504-531 (GQNNSSAKSSPLQRRYTQQGSATSTTGA). The tract at residues 629 to 897 (AAQAIEEFAT…RLNMVRKKQQ (269 aa)) is ATG13-binding.

The protein belongs to the protein kinase superfamily. Ser/Thr protein kinase family. APG1/unc-51/ULK1 subfamily. As to quaternary structure, homodimer. Dimerization requires the presence of ATG13. Forms a ternary complex with ATG13 and ATG17.

The protein localises to the cytoplasm. It is found in the preautophagosomal structure membrane. It catalyses the reaction L-seryl-[protein] + ATP = O-phospho-L-seryl-[protein] + ADP + H(+). The enzyme catalyses L-threonyl-[protein] + ATP = O-phospho-L-threonyl-[protein] + ADP + H(+). Functionally, serine/threonine protein kinase involved in the cytoplasm to vacuole transport (Cvt) and found to be essential in autophagy, where it is required for the formation of autophagosomes. Involved in the clearance of protein aggregates which cannot be efficiently cleared by the proteasome. Required for selective autophagic degradation of the nucleus (nucleophagy) as well as for mitophagy which contributes to regulate mitochondrial quantity and quality by eliminating the mitochondria to a basal level to fulfill cellular energy requirements and preventing excess ROS production. Also involved in endoplasmic reticulum-specific autophagic process, in selective removal of ER-associated degradation (ERAD) substrates. Plays a key role in ATG9 and ATG23 cycling through the pre-autophagosomal structure and is necessary to promote ATG18 binding to ATG9 through phosphorylation of ATG9. Catalyzes phosphorylation of ATG4, decreasing the interaction between ATG4 and ATG8 and impairing deconjugation of PE-conjugated forms of ATG8. Contributes to conidiation by regulating the conidial levels of the conidiation-related protein CP15 and mediates fungal oxidation resistance by controlling total superoxide dismutase (SOD) activity. In Beauveria bassiana (strain ARSEF 2860) (White muscardine disease fungus), this protein is Serine/threonine-protein kinase ATG1.